A 303-amino-acid chain; its full sequence is Protoheme IX farnesyltransferase (303 aa).

9 consecutive transmembrane segments (helical) span residues 26–46, 48–68, 98–118, 120–140, 148–168, 174–194, 221–241, 244–264, and 278–298; these read VVAL…PGMV, IDIL…AAAV, AILF…VWVN, LTAW…TFWL, IVIG…AVTG, ALLL…ALAV, ILLY…THML, LYLL…VAMM, and YSIV…YLLP.

Belongs to the UbiA prenyltransferase family. Protoheme IX farnesyltransferase subfamily.

Its subcellular location is the cell inner membrane. It catalyses the reaction heme b + (2E,6E)-farnesyl diphosphate + H2O = Fe(II)-heme o + diphosphate. It functions in the pathway porphyrin-containing compound metabolism; heme O biosynthesis; heme O from protoheme: step 1/1. Converts heme B (protoheme IX) to heme O by substitution of the vinyl group on carbon 2 of heme B porphyrin ring with a hydroxyethyl farnesyl side group. This is Protoheme IX farnesyltransferase from Saccharophagus degradans (strain 2-40 / ATCC 43961 / DSM 17024).